Reading from the N-terminus, the 309-residue chain is Pseudouridine-5'-phosphate glycosidase 2 (309 aa).

Catalysis depends on Glu-26, which acts as the Proton donor. The substrate site is built by Lys-87 and Val-107. Asp-139 lines the Mn(2+) pocket. Residue 141–143 (SAD) coordinates substrate. Lys-160 serves as the catalytic Nucleophile.

The protein belongs to the pseudouridine-5'-phosphate glycosidase family. In terms of assembly, homotrimer. The cofactor is Mn(2+).

It catalyses the reaction D-ribose 5-phosphate + uracil = psi-UMP + H2O. Its function is as follows. Catalyzes the reversible cleavage of pseudouridine 5'-phosphate (PsiMP) to ribose 5-phosphate and uracil. Functions biologically in the cleavage direction, as part of a pseudouridine degradation pathway. This chain is Pseudouridine-5'-phosphate glycosidase 2, found in Rhizobium johnstonii (strain DSM 114642 / LMG 32736 / 3841) (Rhizobium leguminosarum bv. viciae).